Consider the following 295-residue polypeptide: METSMPEYYEVFGDFHGVLMDKLFTKYWEDVETFSARPDDLLVVTYPKSGSTWIGEIVDMIYKEGDVEKCKEDAIFNRIPYLECRNEDLINGIKQLKEKESPRIVKTHLPAKLLPASFWEKNCKIIYLCRNAKDVVVSYYYFFLIIKSYPNPKSFSEFVEKFMEGQVPYGSWYDHVKSWWEKSKNSRVLFMFYEDMKEDIRREVVKLIEFLERDPLAELVDKIIQHTSFQEMKNNPCTNYSMLPETMIDLKVSPFMRKGIVGDWRNHFPEALRERFEEHYQRHMKDCPVKFRAEL.

48–53 (KSGSTW) lines the 3'-phosphoadenylyl sulfate pocket. Position 106–108 (106–108 (KTH)) interacts with substrate. The active-site Proton acceptor is the His-108. 2 residues coordinate 3'-phosphoadenylyl sulfate: Arg-130 and Ser-138. At Ser-156 the chain carries Phosphoserine. 3'-phosphoadenylyl sulfate is bound by residues Tyr-193, 227 to 232 (TSFQEM), and 257 to 259 (RKG).

It belongs to the sulfotransferase 1 family. In terms of assembly, homodimer. Liver of young mature males and uterus.

It is found in the cytoplasm. The protein localises to the cytosol. It carries out the reaction estrone + 3'-phosphoadenylyl sulfate = estrone 3-sulfate + adenosine 3',5'-bisphosphate + H(+). The catalysed reaction is (24S)-hydroxycholesterol + 3'-phosphoadenylyl sulfate = (24S)-hydroxycholesterol 3-sulfate + adenosine 3',5'-bisphosphate + H(+). It catalyses the reaction 17beta-estradiol + 3'-phosphoadenylyl sulfate = 17beta-estradiol 3-sulfate + adenosine 3',5'-bisphosphate + H(+). The enzyme catalyses 3beta-hydroxyandrost-5-en-17-one + 3'-phosphoadenylyl sulfate = dehydroepiandrosterone 3-sulfate + adenosine 3',5'-bisphosphate + H(+). It carries out the reaction 4-ethylphenol + 3'-phosphoadenylyl sulfate = 4-ethylphenyl sulfate + adenosine 3',5'-bisphosphate + H(+). With respect to regulation, inhibited by estradiol. Sulfotransferase that utilizes 3'-phospho-5'-adenylyl sulfate (PAPS) as sulfonate donor to catalyze the sulfate conjugation of estradiol and estrone. Is a key enzyme in estrogen homeostasis, the sulfation of estrogens leads to their inactivation. Also sulfates dehydroepiandrosterone (DHEA), pregnenolone, (24S)-hydroxycholesterol and xenobiotic compounds like ethinylestradiol, equalenin, diethyl stilbesterol and 1-naphthol at significantly lower efficiency. Does not sulfonate cortisol, testosterone and dopamine. May play a role in gut microbiota-host metabolic interaction. O-sulfonates 4-ethylphenol (4-EP), a dietary tyrosine-derived metabolite produced by gut bacteria. The product 4-EPS crosses the blood-brain barrier and may negatively regulate oligodendrocyte maturation and myelination, affecting the functional connectivity of different brain regions associated with the limbic system. This chain is Sulfotransferase 1E1, found in Rattus norvegicus (Rat).